A 181-amino-acid chain; its full sequence is Protein Syd (181 aa).

The protein belongs to the Syd family.

It localises to the cell inner membrane. Its function is as follows. Interacts with the SecY protein in vivo. May bind preferentially to an uncomplexed state of SecY, thus functioning either as a chelating agent for excess SecY in the cell or as a regulatory factor that negatively controls the translocase function. The chain is Protein Syd from Klebsiella pneumoniae (strain 342).